Here is a 207-residue protein sequence, read N- to C-terminus: Holliday junction branch migration complex subunit RuvA (207 aa).

The interval 1-63 (MIGMLKGRVE…QDAITLFGFL (63 aa)) is domain I. The domain II stretch occupies residues 64 to 142 (DARSKRMFLQ…VDKIETGEPT (79 aa)). Residues 143–153 (STQRIPTDKGV) form a flexible linker region. Residues 153-207 (VEQVVEGLMSLGWKQADAQQAVDSVISSSGIALPLEEGNVPTVLRLALTSLDRGR) are domain III.

This sequence belongs to the RuvA family. As to quaternary structure, homotetramer. Forms an RuvA(8)-RuvB(12)-Holliday junction (HJ) complex. HJ DNA is sandwiched between 2 RuvA tetramers; dsDNA enters through RuvA and exits via RuvB. An RuvB hexamer assembles on each DNA strand where it exits the tetramer. Each RuvB hexamer is contacted by two RuvA subunits (via domain III) on 2 adjacent RuvB subunits; this complex drives branch migration. In the full resolvosome a probable DNA-RuvA(4)-RuvB(12)-RuvC(2) complex forms which resolves the HJ.

It is found in the cytoplasm. Functionally, the RuvA-RuvB-RuvC complex processes Holliday junction (HJ) DNA during genetic recombination and DNA repair, while the RuvA-RuvB complex plays an important role in the rescue of blocked DNA replication forks via replication fork reversal (RFR). RuvA specifically binds to HJ cruciform DNA, conferring on it an open structure. The RuvB hexamer acts as an ATP-dependent pump, pulling dsDNA into and through the RuvAB complex. HJ branch migration allows RuvC to scan DNA until it finds its consensus sequence, where it cleaves and resolves the cruciform DNA. This Bifidobacterium animalis subsp. lactis (strain AD011) protein is Holliday junction branch migration complex subunit RuvA.